A 1020-amino-acid polypeptide reads, in one-letter code: Calcium-transporting ATPase 10, plasma membrane-type (1020 aa).

The Cytoplasmic portion of the chain corresponds to 1 to 175; the sequence is MESYLEENFG…FVWEALQDTT (175 aa). The segment at 21–32 is interaction with calmodulin; it reads ALRRWRKLCGVV. 2 helical membrane passes run 176–196 and 199–219; these read LIIL…MEGW and GAHD…VTAT. Residues 220–263 lie on the Cytoplasmic side of the membrane; sequence SDYRQSLQFKDLDKEKKKIQVQVTRNGFRQRLSIYDLLPGDVVH. A run of 2 helical transmembrane segments spans residues 264–284 and 352–372; these read LAIG…SLLI and GVAT…FIVL. The Cytoplasmic segment spans residues 373 to 400; it reads SQGLISKKYHEGLLLSWSGDDALEMLEH. A helical membrane pass occupies residues 401-421; that stretch reads FAIAVTIVVVAVPEGLPLAVT. Asp456 acts as the 4-aspartylphosphate intermediate in catalysis. The Mg(2+) site is built by Asp758 and Asp762. A helical transmembrane segment spans residues 843–863; that stretch reads LTAVQLLWVNMIMDTLGALAL. Over 864–887 the chain is Cytoplasmic; that stretch reads ATEPPNDDLMKREPVGRTGKFITN. The next 2 membrane-spanning stretches (helical) occupy residues 888–907 and 924–944; these read VMWR…MWYL and VVLN…NEIS. Over 945 to 961 the chain is Cytoplasmic; it reads SREMEKINVLRGILKNY. Helical transmembrane passes span 962 to 982 and 995 to 1015; these read VFLG…QFLG and WIAS…IKLL. Residues 1016–1020 lie on the Cytoplasmic side of the membrane; the sequence is PVGSS.

The protein belongs to the cation transport ATPase (P-type) (TC 3.A.3) family. Type IIB subfamily.

The protein resides in the membrane. The enzyme catalyses Ca(2+)(in) + ATP + H2O = Ca(2+)(out) + ADP + phosphate + H(+). Its activity is regulated as follows. Activated by calmodulin. Its function is as follows. This magnesium-dependent enzyme catalyzes the hydrolysis of ATP coupled with the translocation of calcium from the cytosol out of the cell, into the endoplasmic reticulum, or into organelles. The protein is Calcium-transporting ATPase 10, plasma membrane-type of Oryza sativa subsp. japonica (Rice).